Consider the following 165-residue polypeptide: Putative pre-16S rRNA nuclease (165 aa).

The protein belongs to the YqgF nuclease family.

It is found in the cytoplasm. In terms of biological role, could be a nuclease involved in processing of the 5'-end of pre-16S rRNA. This Beijerinckia indica subsp. indica (strain ATCC 9039 / DSM 1715 / NCIMB 8712) protein is Putative pre-16S rRNA nuclease.